Consider the following 449-residue polypeptide: UDP-N-acetylmuramoylalanine--D-glutamate ligase (449 aa).

Residue 118-124 (GTNGKTT) coordinates ATP.

The protein belongs to the MurCDEF family.

The protein localises to the cytoplasm. It catalyses the reaction UDP-N-acetyl-alpha-D-muramoyl-L-alanine + D-glutamate + ATP = UDP-N-acetyl-alpha-D-muramoyl-L-alanyl-D-glutamate + ADP + phosphate + H(+). Its pathway is cell wall biogenesis; peptidoglycan biosynthesis. Its function is as follows. Cell wall formation. Catalyzes the addition of glutamate to the nucleotide precursor UDP-N-acetylmuramoyl-L-alanine (UMA). This chain is UDP-N-acetylmuramoylalanine--D-glutamate ligase, found in Staphylococcus epidermidis (strain ATCC 35984 / DSM 28319 / BCRC 17069 / CCUG 31568 / BM 3577 / RP62A).